The following is a 228-amino-acid chain: MSQSPIELKGSSFTLSVVHLHDSRPEVIRQALQEKVDQAPAFLKNAPVVINVATLPNGANWKDLQQAVTSAGLRIVGISGCQDERQKRAIARAGLPLLSEGKGQKLAPEPVISPPENVPTQTRIINTPVRSGQQIYARNCDLIVISSVSAGAELIADGNIHIYGMMRGRALAGASGDAKCQIFCTHLGAELVSIAGQYWLSDQIPLEYFGQAARLYLQDNTLTIQPLN.

It belongs to the MinC family. Interacts with MinD and FtsZ.

Cell division inhibitor that blocks the formation of polar Z ring septums. Rapidly oscillates between the poles of the cell to destabilize FtsZ filaments that have formed before they mature into polar Z rings. Prevents FtsZ polymerization. This is Probable septum site-determining protein MinC from Yersinia pseudotuberculosis serotype O:1b (strain IP 31758).